A 473-amino-acid polypeptide reads, in one-letter code: Photosystem II CP43 reaction center protein (473 aa).

Residues 1–14 (MKILYSLRRFYHVE) constitute a propeptide that is removed on maturation. Position 15 is an N-acetylthreonine (Thr15). A Phosphothreonine modification is found at Thr15. Helical transmembrane passes span 69–93 (LFEV…PHLA), 134–155 (LLGP…QDRN), 178–200 (KALY…RKIT), 255–275 (KPFA…LSYS), and 291–312 (WFNN…ASQA). A [CaMn4O5] cluster-binding site is contributed by Glu367. Residues 447 to 471 (RARAAAAGFEKGIDRDLEPVVYMTP) form a helical membrane-spanning segment.

The protein belongs to the PsbB/PsbC family. PsbC subfamily. In terms of assembly, PSII is composed of 1 copy each of membrane proteins PsbA, PsbB, PsbC, PsbD, PsbE, PsbF, PsbH, PsbI, PsbJ, PsbK, PsbL, PsbM, PsbT, PsbX, PsbY, PsbZ, Psb30/Ycf12, at least 3 peripheral proteins of the oxygen-evolving complex and a large number of cofactors. It forms dimeric complexes. Binds multiple chlorophylls and provides some of the ligands for the Ca-4Mn-5O cluster of the oxygen-evolving complex. It may also provide a ligand for a Cl- that is required for oxygen evolution. PSII binds additional chlorophylls, carotenoids and specific lipids. is required as a cofactor. Post-translationally, phosphorylated in both bundle sheath and mesophyll cells, phosphorylation increases when cells are grown under high rather than low light regimes (70 vs 900 umol photons/m-2/s).

It is found in the plastid. The protein resides in the chloroplast thylakoid membrane. Its function is as follows. One of the components of the core complex of photosystem II (PSII). It binds chlorophyll and helps catalyze the primary light-induced photochemical processes of PSII. PSII is a light-driven water:plastoquinone oxidoreductase, using light energy to abstract electrons from H(2)O, generating O(2) and a proton gradient subsequently used for ATP formation. In Zea mays (Maize), this protein is Photosystem II CP43 reaction center protein.